The primary structure comprises 323 residues: 4-hydroxy-3-methylbut-2-enyl diphosphate reductase (323 aa).

Cys21 provides a ligand contact to [4Fe-4S] cluster. The (2E)-4-hydroxy-3-methylbut-2-enyl diphosphate site is built by His50 and His83. Residues His50 and His83 each coordinate dimethylallyl diphosphate. His50 and His83 together coordinate isopentenyl diphosphate. Residue Cys105 participates in [4Fe-4S] cluster binding. His133 contributes to the (2E)-4-hydroxy-3-methylbut-2-enyl diphosphate binding site. Dimethylallyl diphosphate is bound at residue His133. Position 133 (His133) interacts with isopentenyl diphosphate. Catalysis depends on Glu135, which acts as the Proton donor. Thr173 serves as a coordination point for (2E)-4-hydroxy-3-methylbut-2-enyl diphosphate. Cys203 lines the [4Fe-4S] cluster pocket. 4 residues coordinate (2E)-4-hydroxy-3-methylbut-2-enyl diphosphate: Ser231, Ser232, Asn233, and Ser276. Ser231, Ser232, Asn233, and Ser276 together coordinate dimethylallyl diphosphate. Isopentenyl diphosphate is bound by residues Ser231, Ser232, Asn233, and Ser276.

The protein belongs to the IspH family. The cofactor is [4Fe-4S] cluster.

The enzyme catalyses isopentenyl diphosphate + 2 oxidized [2Fe-2S]-[ferredoxin] + H2O = (2E)-4-hydroxy-3-methylbut-2-enyl diphosphate + 2 reduced [2Fe-2S]-[ferredoxin] + 2 H(+). It carries out the reaction dimethylallyl diphosphate + 2 oxidized [2Fe-2S]-[ferredoxin] + H2O = (2E)-4-hydroxy-3-methylbut-2-enyl diphosphate + 2 reduced [2Fe-2S]-[ferredoxin] + 2 H(+). Its pathway is isoprenoid biosynthesis; dimethylallyl diphosphate biosynthesis; dimethylallyl diphosphate from (2E)-4-hydroxy-3-methylbutenyl diphosphate: step 1/1. It functions in the pathway isoprenoid biosynthesis; isopentenyl diphosphate biosynthesis via DXP pathway; isopentenyl diphosphate from 1-deoxy-D-xylulose 5-phosphate: step 6/6. In terms of biological role, catalyzes the conversion of 1-hydroxy-2-methyl-2-(E)-butenyl 4-diphosphate (HMBPP) into a mixture of isopentenyl diphosphate (IPP) and dimethylallyl diphosphate (DMAPP). Acts in the terminal step of the DOXP/MEP pathway for isoprenoid precursor biosynthesis. The chain is 4-hydroxy-3-methylbut-2-enyl diphosphate reductase from Cutibacterium acnes (strain DSM 16379 / KPA171202) (Propionibacterium acnes).